The following is a 307-amino-acid chain: Mycothiol acetyltransferase (307 aa).

N-acetyltransferase domains follow at residues 12 to 157 (TRTD…PPLP) and 160 to 307 (VTLR…YQLG). 1D-myo-inositol 2-(L-cysteinylamino)-2-deoxy-alpha-D-glucopyranoside is bound at residue Glu43. 87–89 (LAV) provides a ligand contact to acetyl-CoA. Residues Glu187, Lys227, and Glu239 each coordinate 1D-myo-inositol 2-(L-cysteinylamino)-2-deoxy-alpha-D-glucopyranoside. Acetyl-CoA is bound by residues 243-245 (LGV) and 250-256 (HGGGLGK). Tyr278 provides a ligand contact to 1D-myo-inositol 2-(L-cysteinylamino)-2-deoxy-alpha-D-glucopyranoside.

Belongs to the acetyltransferase family. MshD subfamily. Monomer.

It carries out the reaction 1D-myo-inositol 2-(L-cysteinylamino)-2-deoxy-alpha-D-glucopyranoside + acetyl-CoA = mycothiol + CoA + H(+). Its function is as follows. Catalyzes the transfer of acetyl from acetyl-CoA to desacetylmycothiol (Cys-GlcN-Ins) to form mycothiol. In Salinispora tropica (strain ATCC BAA-916 / DSM 44818 / JCM 13857 / NBRC 105044 / CNB-440), this protein is Mycothiol acetyltransferase.